A 249-amino-acid chain; its full sequence is MEDIVIVGRHAVKEAIVSGHTINKIWIQEGIRKQQINDILQNAKEQKLIVQTVPKSKLDNLANAPHQGVAALIAPYEYADFDQFIQSQKDKEGLSTVVILDGLEDPHNLGSILRTADASGVDGVIIPKRRSVALTQTVAKASTGAIQHVPVMRVTNLAKTIDELKEHGYWVAGAEADNATDYRDMAADMPLAIVIGSEGQGMSRLVKDKCDFYIKIPMVGHVNSLNASVAASLMMYEVYRKRHQVGDNA.

Gly196, Ile216, and Leu225 together coordinate S-adenosyl-L-methionine.

Belongs to the class IV-like SAM-binding methyltransferase superfamily. RNA methyltransferase TrmH family.

This is Putative TrmH family tRNA/rRNA methyltransferase from Staphylococcus haemolyticus (strain JCSC1435).